Reading from the N-terminus, the 305-residue chain is Superkiller complex protein 8 (305 aa).

WD repeat units follow at residues 14 to 57 (AHED…LEMQ), 62 to 101 (GHQL…QIRS), 104 to 143 (AGPV…KEYS), 146 to 187 (TRGK…HTLE), 188 to 227 (GHAM…LAAT), 230 to 269 (GHGS…CVHT), and 272 to 305 (DHQD…DCPI).

Belongs to the SKI8 family. Component of the PAF1 complex. Component of the SKI complex.

It is found in the nucleus. Its subcellular location is the cytoplasm. Functionally, component of the PAF1 complex (PAF1C) which has multiple functions during transcription by RNA polymerase II and is implicated in regulation of development and maintenance of embryonic stem cell pluripotency. PAF1C associates with RNA polymerase II through interaction with POLR2A CTD non-phosphorylated and 'Ser-2'- and 'Ser-5'-phosphorylated forms and is involved in transcriptional elongation, acting both independently and synergistically with TCEA1 and in cooperation with the DSIF complex and HTATSF1. Also acts as a component of the SKI complex, a multiprotein complex that assists the RNA-degrading exosome during the mRNA decay and quality-control pathways. The SKI complex catalyzes mRNA extraction from 80S ribosomal complexes in the 3'-5' direction and channels mRNA to the cytosolic exosome for degradation. The sequence is that of Superkiller complex protein 8 (skic8) from Xenopus laevis (African clawed frog).